The primary structure comprises 122 residues: Probable glycine cleavage system H protein (122 aa).

The 82-residue stretch at 23 to 104 folds into the Lipoyl-binding domain; the sequence is IATVGITDYA…PYGNWLVKMK (82 aa). An N6-lipoyllysine modification is found at Lys64.

It belongs to the GcvH family. In terms of assembly, the glycine cleavage system is composed of four proteins: P, T, L and H. (R)-lipoate is required as a cofactor.

Functionally, the glycine cleavage system catalyzes the degradation of glycine. The H protein shuttles the methylamine group of glycine from the P protein to the T protein. This is Probable glycine cleavage system H protein from Thermoplasma volcanium (strain ATCC 51530 / DSM 4299 / JCM 9571 / NBRC 15438 / GSS1).